The chain runs to 717 residues: Serologically defined colon cancer antigen 8 homolog (717 aa).

Ser4 and Ser28 each carry phosphoserine. Positions 84–115 are disordered; sequence QTNKENETSPPRRRKLSPSRPSECDDGSMPTM. Coiled-coil stretches lie at residues 129–168, 221–278, 352–590, and 622–712; these read IHHLEAEVKFCKDELSGMKNRVQVVVLENERLQQELKSQR, DANK…LAAS, EEAN…SEQY, and RSQI…LPSM. The tract at residues 216-717 is sufficient for homodimerization; that stretch reads TASTGDANKW…QLPSMPQSDC (502 aa).

Homodimer. Interacts with OFD1; the interaction is direct. Interacts with FAM161A. Interacts with RABEP2, ERC1 and CEP131. As to expression, expressed in liver, kidney, spleen, brain, heart and muscle. Expressed in photoreceptor cells of the retina.

It is found in the cytoplasm. The protein localises to the cytoskeleton. The protein resides in the microtubule organizing center. It localises to the centrosome. Its subcellular location is the centriole. It is found in the cilium basal body. The protein localises to the cell junction. Its function is as follows. Plays a role in the establishment of cell polarity and epithelial lumen formation. Also plays an essential role in ciliogenesis and subsequent Hedgehog signaling pathway that requires the presence of intact primary cilia for pathway activation. Mechanistically, interacts with and mediates RABEP2 centrosomal localization which is critical for ciliogenesis. This Mus musculus (Mouse) protein is Serologically defined colon cancer antigen 8 homolog (Sdccag8).